The chain runs to 359 residues: Guanine nucleotide-binding protein alpha-4 subunit (359 aa).

Gly2 carries the N-myristoyl glycine lipid modification. Cys3 is lipidated: S-palmitoyl cysteine. Positions 31-359 (TEVKLLLLGA…RYNLKDCGLF (329 aa)) constitute a G-alpha domain. The tract at residues 34–47 (KLLLLGAGESGKST) is G1 motif. Residues 39–46 (GAGESGKS), 178–184 (LRARVKS), 203–207 (DVGGQ), 272–275 (NKMD), and Ala331 contribute to the GTP site. Ser46 serves as a coordination point for Mg(2+). The interval 176-184 (DILRARVKS) is G2 motif. The G3 motif stretch occupies residues 199 to 208 (FRMFDVGGQR). The interval 268–275 (ILFLNKMD) is G4 motif. Positions 329–334 (TCATDT) are G5 motif.

The protein belongs to the G-alpha family. G(i/o/t/z) subfamily. In terms of assembly, g proteins are composed of 3 units; alpha, beta and gamma. The alpha chain contains the guanine nucleotide binding site.

In terms of biological role, guanine nucleotide-binding proteins (G proteins) are involved as modulators or transducers in various transmembrane signaling systems. This Caenorhabditis briggsae protein is Guanine nucleotide-binding protein alpha-4 subunit (gpa-4).